The following is a 380-amino-acid chain: Glucose ABC transporter permease protein TsgB13 (380 aa).

A run of 10 helical transmembrane segments spans residues 20-40 (GTPV…LVAL), 59-81 (QFGL…AVYL), 94-114 (GQLL…SLPA), 115-135 (VALL…WAGI), 148-166 (IITS…SYLL), 202-222 (IPLF…VVAT), 255-275 (VYLF…IAEI), 282-301 (FRAA…ALLG), 305-325 (AVKV…GSSV), and 328-348 (AFGV…LFLI).

This sequence belongs to the binding-protein-dependent transport system permease family. As to quaternary structure, the complex is composed of two ATP-binding proteins (TsgD13), two transmembrane proteins (TsgB13 and TsgC13) and a solute-binding protein (TsgA13).

Its subcellular location is the cell membrane. Functionally, part of an ABC transporter complex involved in glucose import. Responsible for the translocation of the substrate across the membrane. This Haloferax volcanii (strain ATCC 29605 / DSM 3757 / JCM 8879 / NBRC 14742 / NCIMB 2012 / VKM B-1768 / DS2) (Halobacterium volcanii) protein is Glucose ABC transporter permease protein TsgB13 (tsgB13).